We begin with the raw amino-acid sequence, 535 residues long: Ribonuclease Y 2 (535 aa).

Residues 1–21 (MLITGLIIGCLLIGLVIGYVV) traverse the membrane as a helical segment. Residues 207–268 (LEHTVTVPNG…IRREVARVAL (62 aa)) enclose the KH domain. An HD domain is found at 334–427 (VLLHSIEVAQ…VAAADAISGA (94 aa)).

It belongs to the RNase Y family.

The protein resides in the cell membrane. Endoribonuclease that initiates mRNA decay. The chain is Ribonuclease Y 2 from Levilactobacillus brevis (strain ATCC 367 / BCRC 12310 / CIP 105137 / JCM 1170 / LMG 11437 / NCIMB 947 / NCTC 947) (Lactobacillus brevis).